Reading from the N-terminus, the 191-residue chain is Phosphoheptose isomerase (191 aa).

The SIS domain occupies isoleucine 34 to serine 191. Asparagine 49 to glycine 51 provides a ligand contact to substrate. Residues histidine 58 and glutamate 62 each contribute to the Zn(2+) site. Substrate-binding positions include glutamate 62, asparagine 91–aspartate 92, threonine 117–serine 119, serine 122, and glutamine 169. 2 residues coordinate Zn(2+): glutamine 169 and histidine 177.

The protein belongs to the SIS family. GmhA subfamily. Zn(2+) serves as cofactor.

It localises to the cytoplasm. The enzyme catalyses 2 D-sedoheptulose 7-phosphate = D-glycero-alpha-D-manno-heptose 7-phosphate + D-glycero-beta-D-manno-heptose 7-phosphate. It participates in carbohydrate biosynthesis; D-glycero-D-manno-heptose 7-phosphate biosynthesis; D-glycero-alpha-D-manno-heptose 7-phosphate and D-glycero-beta-D-manno-heptose 7-phosphate from sedoheptulose 7-phosphate: step 1/1. Its function is as follows. Catalyzes the isomerization of sedoheptulose 7-phosphate in D-glycero-D-manno-heptose 7-phosphate. The sequence is that of Phosphoheptose isomerase from Aquifex aeolicus (strain VF5).